The primary structure comprises 1061 residues: Calcium-transporting ATPase 4, endoplasmic reticulum-type (1061 aa).

A disordered region spans residues 1–21; that stretch reads MGKGGEDCGNKQTNSSELVKS. Residues 1-70 lie on the Cytoplasmic side of the membrane; sequence MGKGGEDCGN…NELEKPEGTS (70 aa). Residues 71–91 traverse the membrane as a helical segment; it reads IFKLILEQFNDTLVRILLAAA. Residues 92-115 are Lumenal-facing; the sequence is VISFVLAFFDGDEGGEMGITAFVE. The chain crosses the membrane as a helical span at residues 116 to 135; it reads PLVIFLILIVNAIVGIWQET. Residues 136 to 278 are Cytoplasmic-facing; the sequence is NAEKALEALK…EEDTPLKKKL (143 aa). The chain crosses the membrane as a helical span at residues 279 to 298; sequence NEFGEVLTMIIGLICALVWL. Residues 299–327 lie on the Lumenal side of the membrane; sequence INVKYFLSWEYVDGWPRNFKFSFEKCTYY. A helical membrane pass occupies residues 328-345; sequence FEIAVALAVAAIPEGLPA. Ca(2+) is bound by residues valine 336, alanine 337, isoleucine 339, and glutamate 341. The Cytoplasmic segment spans residues 346–786; sequence VITTCLALGT…GEGRSIYNNM (441 aa). Aspartate 383 acts as the 4-aspartylphosphate intermediate in catalysis. 2 residues coordinate Mg(2+): aspartate 731 and aspartate 735. Residues 787-806 form a helical membrane-spanning segment; that stretch reads KAFIRYMISSNIGEVASIFL. Residues asparagine 797 and glutamate 800 each contribute to the Ca(2+) site. Residues 807–816 are Lumenal-facing; it reads TAALGIPEGM. Residues 817–837 form a helical membrane-spanning segment; sequence IPVQLLWVNLVTDGPPATALG. Positions 825, 828, and 829 each coordinate Ca(2+). Residues 838–857 are Cytoplasmic-facing; that stretch reads FNPPDKDIMKKPPRRSDDSL. The helical transmembrane segment at 858–880 threads the bilayer; it reads ITAWILFRYMVIGLYVGVATVGV. Topologically, residues 881–950 are lumenal; sequence FIIWYTHNSF…YFQQGKIKAS (70 aa). A helical membrane pass occupies residues 951–970; sequence TLSLSVLVAIEMFNSLNALS. Ca(2+) is bound at residue glutamate 961. At 971–983 the chain is on the cytoplasmic side; the sequence is EDGSLVTMPPWVN. The helical transmembrane segment at 984 to 1002 threads the bilayer; sequence PWLLLAMAVSFGLHFVILY. The Lumenal portion of the chain corresponds to 1003–1017; it reads VPFLAQVFGIVPLSL. The chain crosses the membrane as a helical span at residues 1018–1038; that stretch reads NEWLLVLAVSLPVILIDEVLK. The Cytoplasmic segment spans residues 1039–1061; the sequence is FVGRCTSGYRYSPRTPSAKQKEE.

It belongs to the cation transport ATPase (P-type) (TC 3.A.3) family. Type IIA subfamily.

It is found in the membrane. It carries out the reaction Ca(2+)(in) + ATP + H2O = Ca(2+)(out) + ADP + phosphate + H(+). Functionally, this magnesium-dependent enzyme catalyzes the hydrolysis of ATP coupled with the translocation of calcium from the cytosol to an endomembrane compartment. This Arabidopsis thaliana (Mouse-ear cress) protein is Calcium-transporting ATPase 4, endoplasmic reticulum-type (ECA4).